A 331-amino-acid chain; its full sequence is tRNA N6-adenosine threonylcarbamoyltransferase (331 aa).

Positions 109, 113, and 130 each coordinate Fe cation. Residues 130–134 (YLSGG), aspartate 162, aspartate 183, and serine 262 contribute to the substrate site. Residue aspartate 290 coordinates Fe cation.

The protein belongs to the KAE1 / TsaD family. Fe(2+) serves as cofactor.

The protein localises to the cytoplasm. It carries out the reaction L-threonylcarbamoyladenylate + adenosine(37) in tRNA = N(6)-L-threonylcarbamoyladenosine(37) in tRNA + AMP + H(+). In terms of biological role, required for the formation of a threonylcarbamoyl group on adenosine at position 37 (t(6)A37) in tRNAs that read codons beginning with adenine. Is probably involved in the transfer of the threonylcarbamoyl moiety of threonylcarbamoyl-AMP (TC-AMP) to the N6 group of A37. This Metallosphaera sedula (strain ATCC 51363 / DSM 5348 / JCM 9185 / NBRC 15509 / TH2) protein is tRNA N6-adenosine threonylcarbamoyltransferase.